Reading from the N-terminus, the 725-residue chain is Catalase-peroxidase (725 aa).

The tract at residues 1–20 (MSSEAKCPFPHAANRSRSNQ) is disordered. A cross-link (tryptophyl-tyrosyl-methioninium (Trp-Tyr) (with M-241)) is located at residues 91–215 (WHATGTYRTM…LSATHMGLIY (125 aa)). His92 acts as the Proton acceptor in catalysis. Positions 215–241 (YVNPEGPDGSGDYMAAAKDIRATFYRM) form a cross-link, tryptophyl-tyrosyl-methioninium (Tyr-Met) (with W-91). Residue His256 participates in heme b binding.

The protein belongs to the peroxidase family. Peroxidase/catalase subfamily. As to quaternary structure, homodimer or homotetramer. Heme b is required as a cofactor. Formation of the three residue Trp-Tyr-Met cross-link is important for the catalase, but not the peroxidase activity of the enzyme.

The catalysed reaction is H2O2 + AH2 = A + 2 H2O. It carries out the reaction 2 H2O2 = O2 + 2 H2O. Functionally, bifunctional enzyme with both catalase and broad-spectrum peroxidase activity. This chain is Catalase-peroxidase, found in Janthinobacterium sp. (strain Marseille) (Minibacterium massiliensis).